The chain runs to 4243 residues: Fibrocystin-L (4243 aa).

An N-terminal signal peptide occupies residues 1–20; sequence MGHLWLLGIWGLCGLLLCAA. Residues 21–4210 are Extracellular-facing; that stretch reads DPSTDGSQII…KASTVGTYAQ (4190 aa). IPT/TIG domains follow at residues 31–129, 146–255, and 270–361; these read PKVT…TCKG, PTIR…KMAY, and AEVT…ILEY. Thr-122 carries an O-linked (GalNAc...) threonine glycan. Residues 337-492 enclose the PA14 domain; it reads PGGRGLKLEV…NVYTEQQTGD (156 aa). Thr-445 carries an O-linked (GalNAc...) threonine glycan. 11 consecutive IPT/TIG domains span residues 1067–1151, 1155–1234, 1240–1322, 1330–1469, 1566–1649, 1659–1743, 1749–1828, 1831–1910, 1916–1997, 1999–2085, and 2091–2176; these read PLVL…EFYF, SQIS…AFSY, PIIT…RDKL, LEVT…SFSY, PSIS…TLSN, PNID…TFSY, PYIT…NLTV, PPVA…LFTY, PFLR…VFEY, LNIQ…PFTY, and PLIT…DFLY. O-linked (GalNAc...) threonine glycans are attached at residues Thr-1803 and Thr-1839. One can recognise a G8 1 domain in the interval 2184 to 2304; sequence FSWGGKSPPE…VPVTWTRLAH (121 aa). Thr-2320 carries an O-linked (GalNAc...) threonine glycan. 4 PbH1 repeats span residues 2508–2530, 2566–2588, 2665–2687, and 2733–2756; these read THHLLVERNIIYDIKGGAFFIED, NPNNTIRHNAVAGGTHFGFWYRM, GGALQFHNFVMVNNYEAGIETKR, and SEGLTVSSVHFMNFDRPNCVALGV. In terms of domain architecture, G8 2 spans 3036 to 3174; the sequence is SFWQSSRENN…HSIYKTKLSE (139 aa). PbH1 repeat units lie at residues 3293–3315, 3355–3377, 3416–3438, 3471–3493, and 3527–3548; these read KGNARISNVEFYHSGQEGFRDST, TDGLDIDDNIIHFTVGEGIRIWG, GTNTVLQNNVVAGFGRAGYRIDG, PGCSLIQGFTIWTCWDYGIYFQT, and SKNVQIKSSLIVGSSPGFNCSD. The O-linked (GalNAc...) threonine glycan is linked to Thr-3736. The helical transmembrane segment at 4211 to 4231 threads the bilayer; it reads IMTVVISCLVGRMWLLEIFMA. Residues 4232–4243 lie on the Cytoplasmic side of the membrane; the sequence is AVSTLNITLRSY.

It is found in the membrane. The protein localises to the cell projection. Its subcellular location is the stereocilium membrane. Its function is as follows. Component of hair-cell stereocilia coat. Required for normal hearing. This is Fibrocystin-L (PKHD1L1) from Homo sapiens (Human).